Reading from the N-terminus, the 364-residue chain is UDP-N-acetylglucosamine--N-acetylmuramyl-(pentapeptide) pyrophosphoryl-undecaprenol N-acetylglucosamine transferase 1 (364 aa).

Residues 10–12, Asn124, Ser195, Ile250, and Gln295 contribute to the UDP-N-acetyl-alpha-D-glucosamine site; that span reads TGG.

Belongs to the glycosyltransferase 28 family. MurG subfamily.

It is found in the cell membrane. It carries out the reaction di-trans,octa-cis-undecaprenyl diphospho-N-acetyl-alpha-D-muramoyl-L-alanyl-D-glutamyl-meso-2,6-diaminopimeloyl-D-alanyl-D-alanine + UDP-N-acetyl-alpha-D-glucosamine = di-trans,octa-cis-undecaprenyl diphospho-[N-acetyl-alpha-D-glucosaminyl-(1-&gt;4)]-N-acetyl-alpha-D-muramoyl-L-alanyl-D-glutamyl-meso-2,6-diaminopimeloyl-D-alanyl-D-alanine + UDP + H(+). It participates in cell wall biogenesis; peptidoglycan biosynthesis. Its function is as follows. Cell wall formation. Catalyzes the transfer of a GlcNAc subunit on undecaprenyl-pyrophosphoryl-MurNAc-pentapeptide (lipid intermediate I) to form undecaprenyl-pyrophosphoryl-MurNAc-(pentapeptide)GlcNAc (lipid intermediate II). The protein is UDP-N-acetylglucosamine--N-acetylmuramyl-(pentapeptide) pyrophosphoryl-undecaprenol N-acetylglucosamine transferase 1 of Bacillus anthracis.